The primary structure comprises 430 residues: Enolase (430 aa).

Position 163 (glutamine 163) interacts with (2R)-2-phosphoglycerate. Glutamate 205 (proton donor) is an active-site residue. Residues aspartate 242, glutamate 286, and aspartate 313 each contribute to the Mg(2+) site. 4 residues coordinate (2R)-2-phosphoglycerate: lysine 338, arginine 367, serine 368, and lysine 389. Residue lysine 338 is the Proton acceptor of the active site.

This sequence belongs to the enolase family. It depends on Mg(2+) as a cofactor.

The protein resides in the cytoplasm. Its subcellular location is the secreted. The protein localises to the cell surface. It catalyses the reaction (2R)-2-phosphoglycerate = phosphoenolpyruvate + H2O. It functions in the pathway carbohydrate degradation; glycolysis; pyruvate from D-glyceraldehyde 3-phosphate: step 4/5. Catalyzes the reversible conversion of 2-phosphoglycerate (2-PG) into phosphoenolpyruvate (PEP). It is essential for the degradation of carbohydrates via glycolysis. This Symbiobacterium thermophilum (strain DSM 24528 / JCM 14929 / IAM 14863 / T) protein is Enolase.